Reading from the N-terminus, the 293-residue chain is 4-hydroxy-tetrahydrodipicolinate synthase (293 aa).

Thr46 serves as a coordination point for pyruvate. Tyr133 acts as the Proton donor/acceptor in catalysis. The active-site Schiff-base intermediate with substrate is the Lys161. Pyruvate is bound at residue Val202.

Belongs to the DapA family. Homotetramer; dimer of dimers.

The protein localises to the cytoplasm. It catalyses the reaction L-aspartate 4-semialdehyde + pyruvate = (2S,4S)-4-hydroxy-2,3,4,5-tetrahydrodipicolinate + H2O + H(+). It functions in the pathway amino-acid biosynthesis; L-lysine biosynthesis via DAP pathway; (S)-tetrahydrodipicolinate from L-aspartate: step 3/4. Functionally, catalyzes the condensation of (S)-aspartate-beta-semialdehyde [(S)-ASA] and pyruvate to 4-hydroxy-tetrahydrodipicolinate (HTPA). This chain is 4-hydroxy-tetrahydrodipicolinate synthase, found in Wolbachia pipientis subsp. Culex pipiens (strain wPip).